Consider the following 106-residue polypeptide: ATP-dependent Clp protease adapter protein ClpS (106 aa).

Residues 1–14 (MTDKAGDWQEHGPQ) show a composition bias toward basic and acidic residues. The tract at residues 1–21 (MTDKAGDWQEHGPQVEEAPPQ) is disordered.

Belongs to the ClpS family. As to quaternary structure, binds to the N-terminal domain of the chaperone ClpA.

Involved in the modulation of the specificity of the ClpAP-mediated ATP-dependent protein degradation. This is ATP-dependent Clp protease adapter protein ClpS from Alkalilimnicola ehrlichii (strain ATCC BAA-1101 / DSM 17681 / MLHE-1).